The sequence spans 323 residues: DNA repair and recombination protein RadA (323 aa).

115 to 122 (GEFGSGKT) serves as a coordination point for ATP.

The protein belongs to the eukaryotic RecA-like protein family.

Involved in DNA repair and in homologous recombination. Binds and assemble on single-stranded DNA to form a nucleoprotein filament. Hydrolyzes ATP in a ssDNA-dependent manner and promotes DNA strand exchange between homologous DNA molecules. The polypeptide is DNA repair and recombination protein RadA (Thermoplasma volcanium (strain ATCC 51530 / DSM 4299 / JCM 9571 / NBRC 15438 / GSS1)).